The following is a 483-amino-acid chain: Regulatory protein ViaA (483 aa).

This sequence belongs to the ViaA family. In terms of assembly, homodimer. Interacts with RavA.

The protein localises to the cytoplasm. Component of the RavA-ViaA chaperone complex, which may act on the membrane to optimize the function of some of the respiratory chains. ViaA stimulates the ATPase activity of RavA. This chain is Regulatory protein ViaA, found in Salmonella typhi.